The sequence spans 876 residues: ATP-dependent helicase Lhr-Core (876 aa).

Residues Gln-37, Lys-60, Thr-61, Asp-175, Glu-176, Arg-374, and His-377 each contribute to the ATP site. Residues 41-232 form the Helicase ATP-binding domain; the sequence is IPLIKKGKNV…FLVGGNGDYE (192 aa). Positions 175–178 match the DEAH box motif; the sequence is DEIH. In terms of domain architecture, Helicase C-terminal spans 249 to 421; that stretch reads PVKDLVHATE…NIHVPENPLD (173 aa). The segment at 422–506 is WH domain; sequence VLTQLIVAAS…IFFLNSGTIP (85 aa). Residues 507–876 form a domain 4 region; that stretch reads DEAMIPVKME…DLEYTEAGIK (370 aa).

This sequence belongs to the Lhr helicase family. Lhr-Core subfamily. In terms of assembly, monomer.

The enzyme catalyses Couples ATP hydrolysis with the unwinding of duplex DNA by translocating in the 3'-5' direction.. It catalyses the reaction ATP + H2O = ADP + phosphate + H(+). Functionally, probably part of a 4-gene DNA damage response locus in which the upstream ups system, in combination with this downstream locus, functions in homologous recombination to rescue Sulfolobales from DNA-damaging threats. DNA helicase that translocates in a 3'-5' direction on single-stranded (ss)DNA. Binds Holliday junction (HJ) DNA, Y-shaped DNA, DNA with a 3'-overhang and single-stranded (ss)DNA with high affinity; binds double-stranded (ds)DNA with less affinity. Has helicase activity on DNA with a 3'-overhang, Y-shaped DNA and HJ DNA. Does not unwind blunt-ended dsDNA or DNA with a 5'-overhang. This Sulfolobus acidocaldarius (strain ATCC 33909 / DSM 639 / JCM 8929 / NBRC 15157 / NCIMB 11770) protein is ATP-dependent helicase Lhr-Core.